A 31-amino-acid polypeptide reads, in one-letter code: Zinc metalloproteinase alsophinase (31 aa).

At Gln-1 the chain carries Pyrrolidone carboxylic acid. The 23-residue stretch at 9-31 folds into the Peptidase M12B domain; that stretch reads KYIEFYLVVDNGMFXKYSXXFTV. A Ca(2+)-binding site is contributed by Glu-12.

In terms of assembly, monomer. Zn(2+) serves as cofactor. Contains 9 disulfide bonds. In terms of tissue distribution, expressed by the venom gland.

It is found in the secreted. Its activity is regulated as follows. Inhibited by 1,10-phenanthroline. Snake venom zinc metalloprotease that has potent hemorrhagic activity, fibrinogenolytic activity on the alpha-subunit of human fibrinogen (FGA) in vitro and provokes necrosis in skin, muscle and lung tissues. May contribute to local edema and ecchymosis induced by venom. Hydrolyzes model substrate (beta-chain of insulin) at Ala(14)-Leu(15). In Borikenophis portoricensis (Puerto Rican racer), this protein is Zinc metalloproteinase alsophinase.